Consider the following 286-residue polypeptide: 2-oxoglutarate synthase subunit KorB (286 aa).

In terms of assembly, heterotetramer of the KorA, KorB, KorC and KorD subunits.

It carries out the reaction 2 oxidized [2Fe-2S]-[ferredoxin] + 2-oxoglutarate + CoA = succinyl-CoA + 2 reduced [2Fe-2S]-[ferredoxin] + CO2 + H(+). The polypeptide is 2-oxoglutarate synthase subunit KorB (korB) (Methanothermobacter thermautotrophicus (strain ATCC 29096 / DSM 1053 / JCM 10044 / NBRC 100330 / Delta H) (Methanobacterium thermoautotrophicum)).